Here is a 257-residue protein sequence, read N- to C-terminus: Diacetyl reductase [(S)-acetoin forming] (257 aa).

6 to 30 (IITGAAGGLGKGIAERLANDGFNIV) contacts NAD(+). Residue Ser139 participates in substrate binding. Catalysis depends on Tyr152, which acts as the Proton acceptor. Lys156 is a catalytic residue.

It belongs to the short-chain dehydrogenases/reductases (SDR) family.

It carries out the reaction (S)-acetoin + NAD(+) = diacetyl + NADH + H(+). Functionally, catalyzes the irreversible reduction of 2,3-butanediol to (S)-acetoin in the presence of NADH. In Staphylococcus epidermidis (strain ATCC 12228 / FDA PCI 1200), this protein is Diacetyl reductase [(S)-acetoin forming] (butA).